The sequence spans 114 residues: NADH-quinone oxidoreductase subunit K 2 (114 aa).

The next 3 membrane-spanning stretches (helical) occupy residues 1–21 (MIVP…LGVF), 29–49 (LIMI…AFIG), and 62–82 (FVLF…AIIV).

The protein belongs to the complex I subunit 4L family. NDH-1 is composed of 14 different subunits. Subunits NuoA, H, J, K, L, M, N constitute the membrane sector of the complex.

It is found in the cell inner membrane. It catalyses the reaction a quinone + NADH + 5 H(+)(in) = a quinol + NAD(+) + 4 H(+)(out). In terms of biological role, NDH-1 shuttles electrons from NADH, via FMN and iron-sulfur (Fe-S) centers, to quinones in the respiratory chain. The immediate electron acceptor for the enzyme in this species is believed to be ubiquinone. Couples the redox reaction to proton translocation (for every two electrons transferred, four hydrogen ions are translocated across the cytoplasmic membrane), and thus conserves the redox energy in a proton gradient. The sequence is that of NADH-quinone oxidoreductase subunit K 2 from Syntrophobacter fumaroxidans (strain DSM 10017 / MPOB).